The primary structure comprises 510 residues: NAD(P)H-quinone oxidoreductase subunit 2 B, chloroplastic (510 aa).

Transmembrane regions (helical) follow at residues 24–44, 57–77, 99–119, 124–144, 183–203, 227–247, 295–315, 323–343, 347–367, 395–415, 418–438, and 484–504; these read LLLF…GLIL, IPWL…ALLF, IFQF…VEYI, MAIT…MFLC, YLLM…WLYG, PGIS…LSPA, WHLL…LIAI, MLAY…IVGD, GYAS…GTFA, ALSS…AGFF, LHLF…IGLL, and MIVC…IIAI.

The protein belongs to the complex I subunit 2 family. NDH is composed of at least 16 different subunits, 5 of which are encoded in the nucleus.

Its subcellular location is the plastid. The protein localises to the chloroplast thylakoid membrane. It catalyses the reaction a plastoquinone + NADH + (n+1) H(+)(in) = a plastoquinol + NAD(+) + n H(+)(out). The enzyme catalyses a plastoquinone + NADPH + (n+1) H(+)(in) = a plastoquinol + NADP(+) + n H(+)(out). In terms of biological role, NDH shuttles electrons from NAD(P)H:plastoquinone, via FMN and iron-sulfur (Fe-S) centers, to quinones in the photosynthetic chain and possibly in a chloroplast respiratory chain. The immediate electron acceptor for the enzyme in this species is believed to be plastoquinone. Couples the redox reaction to proton translocation, and thus conserves the redox energy in a proton gradient. The chain is NAD(P)H-quinone oxidoreductase subunit 2 B, chloroplastic from Calycanthus floridus var. glaucus (Eastern sweetshrub).